Here is a 146-residue protein sequence, read N- to C-terminus: Putative type II restriction enzyme MjaORF1200P (146 aa).

To A.pernix APE2001.

It catalyses the reaction Endonucleolytic cleavage of DNA to give specific double-stranded fragments with terminal 5'-phosphates.. Functionally, a putative type II restriction enzyme, its methylase would be M.MjaORF1200P (AC Q58600). The polypeptide is Putative type II restriction enzyme MjaORF1200P (Methanocaldococcus jannaschii (strain ATCC 43067 / DSM 2661 / JAL-1 / JCM 10045 / NBRC 100440) (Methanococcus jannaschii)).